Consider the following 1282-residue polypeptide: Myosin-1 (1282 aa).

Residues 1 to 30 (MAISKKAGAKKAGAVSKPPPSKGASSKGGV) form a disordered region. One can recognise a Myosin motor domain in the interval 44–723 (AGVSDMTLLS…TLFALETMRD (680 aa)). ATP is bound at residue 137–144 (GESGAGKT). At serine 365 the chain carries Phosphoserine. The segment at 412–494 (VIGVLDIYGF…PGIFSALNDA (83 aa)) is actin-binding. Positions 569–590 (LQKLFPDRPDPNSKKRPPTAGD) are disordered. IQ domains follow at residues 727–747 (HNMA…KEEC) and 748–773 (ARRI…YGHQ). The TH1 domain maps to 781-977 (RRRFSLLGLR…AVSVCSGEPA (197 aa)). Residues 973 to 1073 (SGEPANSVSR…PPPAAVAPSE (101 aa)) form a disordered region. Positions 1029–1058 (PGSGAAGTARPAAAVGSASAGAGVGATRSA) are enriched in low complexity. The span at 1059-1068 (PRPPPPPPAA) shows a compositional bias: pro residues. The SH3 domain occupies 1074 to 1135 (PQVARYKALY…PSNYLELIVQ (62 aa)). Positions 1237-1282 (AAAAAAGAGANGKGAGAPPAVAAKPVVAPKPAGSNGRAMPPPPPRR) are disordered. Positions 1252-1269 (GAPPAVAAKPVVAPKPAG) are enriched in low complexity.

The protein belongs to the TRAFAC class myosin-kinesin ATPase superfamily. Myosin family. Phosphorylation of the TEDS site (Ser-365) is required for the polarization of the actin cytoskeleton. Phosphorylation probably activates the myosin-I ATPase activity.

It is found in the cytoplasm. The protein localises to the cytoskeleton. The protein resides in the actin patch. In terms of biological role, type-I myosin implicated in the organization of the actin cytoskeleton. Required for proper actin cytoskeleton polarization. At the cell cortex, assembles in patch-like structures together with proteins from the actin-polymerizing machinery and promotes actin assembly. Functions as actin nucleation-promoting factor (NPF) for the Arp2/3 complex. This is Myosin-1 (myo1) from Mycosarcoma maydis (Corn smut fungus).